Reading from the N-terminus, the 353-residue chain is Probable peptide ABC transporter ATP-binding protein y4tS (353 aa).

The region spanning 6–256 (LKVESLTKHY…PVHPYTEALI (251 aa)) is the ABC transporter domain. Residue 49-56 (GESGCGKS) coordinates ATP.

Belongs to the ABC transporter superfamily.

Its subcellular location is the cell inner membrane. Probably part of a binding-protein-dependent transport system y4tOPQRS for a peptide. Probably responsible for energy coupling to the transport system. The sequence is that of Probable peptide ABC transporter ATP-binding protein y4tS from Sinorhizobium fredii (strain NBRC 101917 / NGR234).